We begin with the raw amino-acid sequence, 437 residues long: Ribosomal protein uS12 methylthiotransferase RimO (437 aa).

An MTTase N-terminal domain is found at 5–116; that stretch reads PTISVSHLGC…IAEVIQRVET (112 aa). C14, C50, C79, C154, C158, and C161 together coordinate [4Fe-4S] cluster. Residues 140 to 369 enclose the Radical SAM core domain; sequence TTNEAVAYLR…MEIQQPIAAK (230 aa). The TRAM domain occupies 372–437; it reads QKCVGQTVEV…DVYDLYGKVI (66 aa).

This sequence belongs to the methylthiotransferase family. RimO subfamily. It depends on [4Fe-4S] cluster as a cofactor.

The protein resides in the cytoplasm. It catalyses the reaction L-aspartate(89)-[ribosomal protein uS12]-hydrogen + (sulfur carrier)-SH + AH2 + 2 S-adenosyl-L-methionine = 3-methylsulfanyl-L-aspartate(89)-[ribosomal protein uS12]-hydrogen + (sulfur carrier)-H + 5'-deoxyadenosine + L-methionine + A + S-adenosyl-L-homocysteine + 2 H(+). Functionally, catalyzes the methylthiolation of an aspartic acid residue of ribosomal protein uS12. This Crocosphaera subtropica (strain ATCC 51142 / BH68) (Cyanothece sp. (strain ATCC 51142)) protein is Ribosomal protein uS12 methylthiotransferase RimO.